The following is a 274-amino-acid chain: Probable endonuclease LCL3 (274 aa).

Residues alanine 15–tyrosine 32 traverse the membrane as a helical segment. The region spanning histidine 53–glutamine 261 is the TNase-like domain. The active site involves arginine 151. Aspartate 156 is a binding site for Ca(2+). Residues glutamate 159 and arginine 199 contribute to the active site.

The protein belongs to the LCL3 family.

It is found in the mitochondrion. The protein resides in the membrane. The polypeptide is Probable endonuclease LCL3 (LCL3) (Saccharomyces cerevisiae (strain RM11-1a) (Baker's yeast)).